A 406-amino-acid chain; its full sequence is Renin (406 aa).

Residues 1 to 23 (MDGWRRMPRWGLLLLLWGSCTFG) form the signal peptide. Positions 24-66 (LPTDTTTFKRIFLKRMPSIRESLKERGVDMARLGPEWSQPMKR) are cleaved as a propeptide — activation peptide. Residue Asn71 is glycosylated (N-linked (GlcNAc...) asparagine). In terms of domain architecture, Peptidase A1 spans 86–403 (YYGEIGIGTP…DRRNNRIGFA (318 aa)). Residue Asp104 is part of the active site. An intrachain disulfide couples Cys117 to Cys124. Asn141 is a glycosylation site (N-linked (GlcNAc...) asparagine). Cysteines 283 and 287 form a disulfide. Asp292 is an active-site residue. A disulfide bridge links Cys325 with Cys362.

It belongs to the peptidase A1 family. In terms of assembly, interacts with ATP6AP2.

The protein localises to the secreted. The protein resides in the membrane. It catalyses the reaction Cleavage of Leu-|-Xaa bond in angiotensinogen to generate angiotensin I.. With respect to regulation, interaction with ATP6AP2 results in a 5-fold increased efficiency in angiotensinogen processing. Renin is a highly specific endopeptidase, whose only known function is to generate angiotensin I from angiotensinogen in the plasma, initiating a cascade of reactions that produce an elevation of blood pressure and increased sodium retention by the kidney. The protein is Renin (REN) of Homo sapiens (Human).